The primary structure comprises 331 residues: UBX domain-containing protein 2B (331 aa).

Disordered stretches follow at residues 1–26 and 38–63; these read MAEG…SARD and EMKC…PPLR. At Ala-2 the chain carries N-acetylalanine. Basic and acidic residues predominate over residues 38–48; that stretch reads EMKCKSSKPDR. Ser-56 bears the Phosphoserine mark. At Thr-59 the chain carries Phosphothreonine. A Phosphoserine modification is found at Ser-66. One can recognise an SEP domain in the interval 141–206; sequence DVQILLRLWS…MEDHQDQEYI (66 aa). A phosphoserine mark is found at Ser-231, Ser-234, and Ser-235. The 78-residue stretch at 252–329 folds into the UBX domain; it reads DSVPTTKIQI…DILNTVILQQ (78 aa).

The protein belongs to the NSFL1C family. Interacts with VCP. Does not bind ubiquitin. In terms of tissue distribution, present at high level in brain. Also present in liver, kidney, spleen, testis, lung and heart (at protein level).

It is found in the nucleus. The protein localises to the cytoplasm. It localises to the cytosol. Its subcellular location is the endoplasmic reticulum. The protein resides in the golgi apparatus. It is found in the cytoskeleton. The protein localises to the microtubule organizing center. It localises to the centrosome. In terms of biological role, adapter protein required for Golgi and endoplasmic reticulum biogenesis. Involved in Golgi and endoplasmic reticulum maintenance during interphase and in their reassembly at the end of mitosis. The complex formed with VCP has membrane fusion activity; membrane fusion activity requires USO1-GOLGA2 tethering and BET1L. VCPIP1 is also required, but not its deubiquitinating activity. Together with NSFL1C/p47, regulates the centrosomal levels of kinase AURKA/Aurora A during mitotic progression by promoting AURKA removal from centrosomes in prophase. Also, regulates spindle orientation during mitosis. This is UBX domain-containing protein 2B (Ubxn2b) from Rattus norvegicus (Rat).